The following is an 82-amino-acid chain: Antitoxin MazE2 (82 aa).

As to quaternary structure, probably forms a complex with cognate toxin MazF2.

Its function is as follows. Antitoxin component of a type II toxin-antitoxin (TA) system. Labile antitoxin that binds to cognate MazF2 toxin and counteracts its endoribonuclease activity. This is Antitoxin MazE2 (mazE2) from Mycobacterium bovis (strain ATCC BAA-935 / AF2122/97).